A 242-amino-acid polypeptide reads, in one-letter code: MAKRGKKYLKALELVDKDKLYSIEEAVETLKKMEEVLQRKFDETVELIFRLGVDPKYADQMVRGSVVLPHGLGKELKVLVITQGEKVKEAEEAGADYVGGEDMINKILNENWLDFDVVIATPDMMPKVAKLGRVLGPRGLMPNPKVGTVTQDVKKAVTEAKKGRVEFKVDKTGNLHVPIGKISFDNNKLVENALEVIETVQKLRPSGLKGQYIKNMVMKTTMSPSVKLDVLSILRSLEAKAA.

The protein belongs to the universal ribosomal protein uL1 family. As to quaternary structure, part of the 50S ribosomal subunit.

Functionally, binds directly to 23S rRNA. The L1 stalk is quite mobile in the ribosome, and is involved in E site tRNA release. Protein L1 is also a translational repressor protein, it controls the translation of the L11 operon by binding to its mRNA. The chain is Large ribosomal subunit protein uL1 from Persephonella marina (strain DSM 14350 / EX-H1).